A 665-amino-acid polypeptide reads, in one-letter code: Protein-arginine deiminase type-2 (665 aa).

17 residues coordinate Ca(2+): Asp-123, Asp-125, Asp-127, Glu-131, Asn-154, Asp-156, Asp-158, Asp-166, Asp-169, Lys-171, Asp-177, Asp-180, Glu-354, Asp-389, Phe-408, Leu-411, and Glu-412. Residue Cys-647 is the Nucleophile of the active site.

The protein belongs to the protein arginine deiminase family. In terms of assembly, homodimer. It depends on Ca(2+) as a cofactor. Spinal cord, submaxillary gland, cerebrum, cerebellum, and skeletal muscle.

Its subcellular location is the cytoplasm. The catalysed reaction is L-arginyl-[protein] + H2O = L-citrullyl-[protein] + NH4(+). Its function is as follows. Catalyzes the deimination of arginine residues of proteins. This Rattus norvegicus (Rat) protein is Protein-arginine deiminase type-2 (Padi2).